The primary structure comprises 314 residues: Probable serine/threonine-protein kinase WNK11 (314 aa).

The disordered stretch occupies residues 1 to 22; sequence MMTCASSDDNESEKDKDSESFV. In terms of domain architecture, Protein kinase spans 31–289; sequence GRYGELLGSG…AAELLCDPFF (259 aa). 111-114 is a binding site for ATP; sequence TEIC. Catalysis depends on aspartate 178, which acts as the Proton acceptor. The segment at 295–314 is disordered; the sequence is DDDEDGENNDNNGAGRIVVS.

This sequence belongs to the protein kinase superfamily. Ser/Thr protein kinase family. WNK subfamily.

It carries out the reaction L-seryl-[protein] + ATP = O-phospho-L-seryl-[protein] + ADP + H(+). The catalysed reaction is L-threonyl-[protein] + ATP = O-phospho-L-threonyl-[protein] + ADP + H(+). In terms of biological role, may regulate flowering time by modulating the photoperiod pathway. In Arabidopsis thaliana (Mouse-ear cress), this protein is Probable serine/threonine-protein kinase WNK11 (WNK11).